The primary structure comprises 84 residues: U2-theraphotoxin-Cg1b 1 (84 aa).

A signal peptide spans 1–21 (MKVSVLITLAVWGVMFLLTSA). The propeptide occupies 22–48 (QERGSDQMDSPAWLKSMERIFQSEERE). Disulfide bonds link C49–C63, C56–C68, and C62–C76.

Belongs to the neurotoxin 10 (Hwtx-1) family. 06 (F4b) subfamily. In terms of tissue distribution, expressed by the venom gland.

It localises to the secreted. Probable ion channel inhibitor. The protein is U2-theraphotoxin-Cg1b 1 of Chilobrachys guangxiensis (Chinese earth tiger tarantula).